A 329-amino-acid chain; its full sequence is Isoaspartyl peptidase/L-asparaginase (329 aa).

Catalysis depends on T173, which acts as the Nucleophile. Substrate is bound by residues R201 to D204 and T222 to G225.

Belongs to the Ntn-hydrolase family. Heterotetramer of two alpha and two beta chains arranged as a dimer of alpha/beta heterodimers. Post-translationally, cleaved into an alpha and beta chain by autocatalysis; this activates the enzyme. The N-terminal residue of the beta subunit is responsible for the nucleophile hydrolase activity.

It carries out the reaction Cleavage of a beta-linked Asp residue from the N-terminus of a polypeptide.. Degrades proteins damaged by L-isoaspartyl residue formation (also known as beta-Asp residues). Probably performs the final step in the degradation of the reserve polymer cyanophycin (depolymerizes the building block L-beta-Asp-Arg). Also has L-asparaginase activity. The chain is Isoaspartyl peptidase/L-asparaginase from Synechocystis sp. (strain ATCC 27184 / PCC 6803 / Kazusa).